The primary structure comprises 278 residues: uncharacterized protein (278 aa).

This is an uncharacterized protein from Methanocaldococcus jannaschii (strain ATCC 43067 / DSM 2661 / JAL-1 / JCM 10045 / NBRC 100440) (Methanococcus jannaschii).